A 554-amino-acid chain; its full sequence is 5'-AMP-activated protein kinase catalytic subunit alpha-1 (554 aa).

The 253-residue stretch at 22-274 (YILGDTLGVG…IKDIREHEWF (253 aa)) folds into the Protein kinase domain. Position 27 is a phosphothreonine (Thr-27). Residues 28–36 (LGVGTFGKV) and Lys-51 contribute to the ATP site. Asp-145 functions as the Proton acceptor in the catalytic mechanism. Thr-178 bears the Phosphothreonine; by LKB1 and CaMKK2 mark. Thr-264 and Thr-350 each carry phosphothreonine. The interval 297–376 (EALKEVCEKF…PERVPFLVAE (80 aa)) is AIS. Ser-351 bears the Phosphoserine mark. Residue Ser-355 is modified to Phosphoserine; by ULK1. Thr-363 is modified (phosphothreonine; by ULK1). The residue at position 377 (Thr-377) is a Phosphothreonine. The residue at position 392 (Ser-392) is a Phosphoserine; by ULK1. At Ser-462 the chain carries Phosphoserine. Positions 480–500 (KSGTATPQRSGSVSNYRSCQR) are enriched in polar residues. The interval 480 to 531 (KSGTATPQRSGSVSNYRSCQRSDSDAEAQGKSSEVSLTSSVTSLDSSPVDLT) is disordered. Ser-481 carries the post-translational modification Phosphoserine; by ULK1. Phosphothreonine; by ULK1 is present on Thr-483. Phosphothreonine is present on Thr-485. A phosphoserine mark is found at Ser-491, Ser-503, Ser-519, and Ser-522. Positions 511 to 530 (SSEVSLTSSVTSLDSSPVDL) are enriched in low complexity.

The protein belongs to the protein kinase superfamily. CAMK Ser/Thr protein kinase family. SNF1 subfamily. In terms of assembly, AMPK is a heterotrimer of an alpha catalytic subunit (PRKAA1 or PRKAA2), a beta (PRKAB1 or PRKAB2) and a gamma non-catalytic subunits (PRKAG1, PRKAG2 or PRKAG3). Interacts with FNIP1 and FNIP2. It depends on Mg(2+) as a cofactor. In terms of processing, ubiquitinated. Post-translationally, phosphorylated at Thr-183 by STK11/LKB1 in complex with STE20-related adapter-alpha (STRADA) pseudo kinase and CAB39. Also phosphorylated at Thr-183 by CAMKK2; triggered by a rise in intracellular calcium ions, without detectable changes in the AMP/ATP ratio. CAMKK1 can also phosphorylate Thr-183, but at a much lower level. Dephosphorylated by protein phosphatase 2A and 2C (PP2A and PP2C). Phosphorylated by ULK1 and ULK2; leading to negatively regulate AMPK activity and suggesting the existence of a regulatory feedback loop between ULK1, ULK2 and AMPK. Dephosphorylated by PPM1A and PPM1B. Glycosylated; O-GlcNAcylated by OGT, promoting the AMP-activated protein kinase (AMPK) activity.

It localises to the cytoplasm. The protein localises to the nucleus. The catalysed reaction is L-seryl-[protein] + ATP = O-phospho-L-seryl-[protein] + ADP + H(+). It catalyses the reaction L-threonyl-[protein] + ATP = O-phospho-L-threonyl-[protein] + ADP + H(+). It carries out the reaction L-seryl-[acetyl-CoA carboxylase] + ATP = O-phospho-L-seryl-[acetyl-CoA carboxylase] + ADP + H(+). The enzyme catalyses L-seryl-[3-hydroxy-3-methylglutaryl-coenzyme A reductase] + ATP = O-phospho-L-seryl-[3-hydroxy-3-methylglutaryl-coenzyme A reductase] + ADP + H(+). The catalysed reaction is L-seryl-[tau protein] + ATP = O-phospho-L-seryl-[tau protein] + ADP + H(+). It catalyses the reaction L-threonyl-[tau protein] + ATP = O-phospho-L-threonyl-[tau protein] + ADP + H(+). Its activity is regulated as follows. Activated by phosphorylation on Thr-183. Binding of AMP to non-catalytic gamma subunit (PRKAG1, PRKAG2 or PRKAG3) results in allosteric activation, inducing phosphorylation on Thr-183. AMP-binding to gamma subunit also sustains activity by preventing dephosphorylation of Thr-183. ADP also stimulates Thr-183 phosphorylation, without stimulating already phosphorylated AMPK. ATP promotes dephosphorylation of Thr-183, rendering the enzyme inactive. Under physiological conditions AMPK mainly exists in its inactive form in complex with ATP, which is much more abundant than AMP. Selectively inhibited by compound C (6-[4-(2-Piperidin-1-yl-ethoxy)-phenyl)]-3-pyridin-4-yl-pyyrazolo[1,5-a] pyrimidine. Activated by resveratrol, a natural polyphenol present in red wine, and S17834, a synthetic polyphenol. Its function is as follows. Catalytic subunit of AMP-activated protein kinase (AMPK), an energy sensor protein kinase that plays a key role in regulating cellular energy metabolism. In response to reduction of intracellular ATP levels, AMPK activates energy-producing pathways and inhibits energy-consuming processes: inhibits protein, carbohydrate and lipid biosynthesis, as well as cell growth and proliferation. AMPK acts via direct phosphorylation of metabolic enzymes, and by longer-term effects via phosphorylation of transcription regulators. Regulates lipid synthesis by phosphorylating and inactivating lipid metabolic enzymes such as ACACA, ACACB, GYS1, HMGCR and LIPE; regulates fatty acid and cholesterol synthesis by phosphorylating acetyl-CoA carboxylase (ACACA and ACACB) and hormone-sensitive lipase (LIPE) enzymes, respectively. Promotes lipolysis of lipid droplets by mediating phosphorylation of isoform 1 of CHKA (CHKalpha2). Regulates insulin-signaling and glycolysis by phosphorylating IRS1, PFKFB2 and PFKFB3. AMPK stimulates glucose uptake in muscle by increasing the translocation of the glucose transporter SLC2A4/GLUT4 to the plasma membrane, possibly by mediating phosphorylation of TBC1D4/AS160. Regulates transcription and chromatin structure by phosphorylating transcription regulators involved in energy metabolism such as CRTC2/TORC2, FOXO3, histone H2B, HDAC5, MEF2C, MLXIPL/ChREBP, EP300, HNF4A, p53/TP53, SREBF1, SREBF2 and PPARGC1A. Acts as a key regulator of glucose homeostasis in liver by phosphorylating CRTC2/TORC2, leading to CRTC2/TORC2 sequestration in the cytoplasm. In response to stress, phosphorylates 'Ser-36' of histone H2B (H2BS36ph), leading to promote transcription. Acts as a key regulator of cell growth and proliferation by phosphorylating FNIP1, TSC2, RPTOR, WDR24 and ATG1/ULK1: in response to nutrient limitation, negatively regulates the mTORC1 complex by phosphorylating RPTOR component of the mTORC1 complex and by phosphorylating and activating TSC2. Also phosphorylates and inhibits GATOR2 subunit WDR24 in response to nutrient limitation, leading to suppress glucose-mediated mTORC1 activation. In response to energetic stress, phosphorylates FNIP1, inactivating the non-canonical mTORC1 signaling, thereby promoting nuclear translocation of TFEB and TFE3, and inducing transcription of lysosomal or autophagy genes. In response to nutrient limitation, promotes autophagy by phosphorylating and activating ATG1/ULK1. In that process also activates WDR45/WIPI4. Phosphorylates CASP6, thereby preventing its autoprocessing and subsequent activation. In response to nutrient limitation, phosphorylates transcription factor FOXO3 promoting FOXO3 mitochondrial import. Also acts as a regulator of cellular polarity by remodeling the actin cytoskeleton; probably by indirectly activating myosin. AMPK also acts as a regulator of circadian rhythm by mediating phosphorylation of CRY1, leading to destabilize it. May regulate the Wnt signaling pathway by phosphorylating CTNNB1, leading to stabilize it. Also has tau-protein kinase activity: in response to amyloid beta A4 protein (APP) exposure, activated by CAMKK2, leading to phosphorylation of MAPT/TAU; however the relevance of such data remains unclear in vivo. Also phosphorylates CFTR, EEF2K, KLC1, NOS3 and SLC12A1. Regulates hepatic lipogenesis. Activated via SIRT3, represses sterol regulatory element-binding protein (SREBP) transcriptional activities and ATP-consuming lipogenesis to restore cellular energy balance. Upon stress, regulates mitochondrial fragmentation through phosphorylation of MTFR1L. In Pongo abelii (Sumatran orangutan), this protein is 5'-AMP-activated protein kinase catalytic subunit alpha-1 (PRKAA1).